The chain runs to 415 residues: Amylovoran biosynthesis protein AmsJ (415 aa).

The protein belongs to the polysaccharide pyruvyl transferase family.

Its pathway is glycan metabolism; exopolysaccharide biosynthesis. In terms of biological role, involved in the biosynthesis of amylovoran which functions as a virulence factor. This is Amylovoran biosynthesis protein AmsJ (amsJ) from Erwinia amylovora (Fire blight bacteria).